The primary structure comprises 1244 residues: ATP-dependent helicase/nuclease subunit A (1244 aa).

The UvrD-like helicase ATP-binding domain maps to 4-475 (KKWTAEQLAA…IGLSKNFRSR (472 aa)). 25-32 (AAAGAGKT) is an ATP binding site. In terms of domain architecture, UvrD-like helicase C-terminal spans 515-816 (EDVKTATGPV…RIMSIHKSKG (302 aa)). The segment at 538-559 (EQNTDSAEEKLTDGEEQEDLDS) is disordered.

This sequence belongs to the helicase family. AddA subfamily. In terms of assembly, heterodimer of AddA and AddB/RexB. Mg(2+) is required as a cofactor.

It catalyses the reaction Couples ATP hydrolysis with the unwinding of duplex DNA by translocating in the 3'-5' direction.. It carries out the reaction ATP + H2O = ADP + phosphate + H(+). The heterodimer acts as both an ATP-dependent DNA helicase and an ATP-dependent, dual-direction single-stranded exonuclease. Recognizes the chi site generating a DNA molecule suitable for the initiation of homologous recombination. The AddA nuclease domain is required for chi fragment generation; this subunit has the helicase and 3' -&gt; 5' nuclease activities. This chain is ATP-dependent helicase/nuclease subunit A, found in Desulforamulus reducens (strain ATCC BAA-1160 / DSM 100696 / MI-1) (Desulfotomaculum reducens).